The sequence spans 126 residues: Aspartate 1-decarboxylase 1 (126 aa).

The active-site Schiff-base intermediate with substrate; via pyruvic acid is the serine 25. Pyruvic acid (Ser) is present on serine 25. Threonine 57 contributes to the substrate binding site. The Proton donor role is filled by tyrosine 58. Substrate is bound at residue 73–75 (GSA).

The protein belongs to the PanD family. As to quaternary structure, heterooctamer of four alpha and four beta subunits. It depends on pyruvate as a cofactor. Is synthesized initially as an inactive proenzyme, which is activated by self-cleavage at a specific serine bond to produce a beta-subunit with a hydroxyl group at its C-terminus and an alpha-subunit with a pyruvoyl group at its N-terminus.

The protein resides in the cytoplasm. It carries out the reaction L-aspartate + H(+) = beta-alanine + CO2. Its pathway is cofactor biosynthesis; (R)-pantothenate biosynthesis; beta-alanine from L-aspartate: step 1/1. In terms of biological role, catalyzes the pyruvoyl-dependent decarboxylation of aspartate to produce beta-alanine. This is Aspartate 1-decarboxylase 1 from Polaromonas sp. (strain JS666 / ATCC BAA-500).